The sequence spans 379 residues: Galactose-1-phosphate uridylyltransferase (379 aa).

The span at 1 to 10 (MSHSGADPEQ) shows a compositional bias: basic and acidic residues. Residues 1–20 (MSHSGADPEQRQQASEADAM) are disordered. Cysteine 75 is a binding site for Zn(2+). Residues alanine 81, 97 to 98 (ND), and asparagine 173 each bind UDP-alpha-D-glucose. A Zn(2+)-binding site is contributed by histidine 184. Histidine 186 serves as the catalytic Tele-UMP-histidine intermediate. Glutamine 188 contributes to the UDP-alpha-D-glucose binding site. Residues glutamate 202, histidine 301, histidine 319, and histidine 321 each coordinate Zn(2+). UDP-alpha-D-glucose is bound by residues 334-337 (KFMV) and 339-340 (YE).

The protein belongs to the galactose-1-phosphate uridylyltransferase type 1 family. Homodimer. Requires Zn(2+) as cofactor.

It carries out the reaction alpha-D-galactose 1-phosphate + UDP-alpha-D-glucose = alpha-D-glucose 1-phosphate + UDP-alpha-D-galactose. Its pathway is carbohydrate metabolism; galactose metabolism. Plays an important role in galactose metabolism. The chain is Galactose-1-phosphate uridylyltransferase (Galt) from Mus musculus (Mouse).